The primary structure comprises 67 residues: MPKMKTKSSAKKRFRVRPGGTVKRGQAFKRHILTKKTTKNKRHLRGAVAVHETNMVSVAAMLPGRGI.

Positions 1–16 (MPKMKTKSSAKKRFRV) are enriched in basic residues. Residues 1 to 23 (MPKMKTKSSAKKRFRVRPGGTVK) are disordered.

This sequence belongs to the bacterial ribosomal protein bL35 family.

This chain is Large ribosomal subunit protein bL35, found in Variovorax paradoxus (strain S110).